The sequence spans 488 residues: 3-octaprenyl-4-hydroxybenzoate carboxy-lyase (488 aa).

Asn172 contacts Mn(2+). Residues 175-177 (IYR), 189-191 (RWL), and 194-195 (RG) contribute to the prenylated FMN site. Glu238 contacts Mn(2+). Catalysis depends on Asp287, which acts as the Proton donor.

The protein belongs to the UbiD family. As to quaternary structure, homohexamer. Requires prenylated FMN as cofactor. Mn(2+) serves as cofactor.

The protein resides in the cell membrane. The catalysed reaction is a 4-hydroxy-3-(all-trans-polyprenyl)benzoate + H(+) = a 2-(all-trans-polyprenyl)phenol + CO2. Its pathway is cofactor biosynthesis; ubiquinone biosynthesis. In terms of biological role, catalyzes the decarboxylation of 3-octaprenyl-4-hydroxy benzoate to 2-octaprenylphenol, an intermediate step in ubiquinone biosynthesis. The sequence is that of 3-octaprenyl-4-hydroxybenzoate carboxy-lyase from Alkalilimnicola ehrlichii (strain ATCC BAA-1101 / DSM 17681 / MLHE-1).